The primary structure comprises 221 residues: UPF0758 protein KPN78578_39390 (221 aa).

One can recognise an MPN domain in the interval 99–221 (ALVTPSMTRE…YVSFAERGWI (123 aa)). Residues His170, His172, and Asp183 each coordinate Zn(2+). Positions 170 to 183 (HNHPSGSPEPSQAD) match the JAMM motif motif.

This sequence belongs to the UPF0758 family. YicR subfamily.

The protein is UPF0758 protein KPN78578_39390 of Klebsiella pneumoniae subsp. pneumoniae (strain ATCC 700721 / MGH 78578).